The chain runs to 91 residues: Large ribosomal subunit protein bL27 (91 aa).

The tract at residues 1 to 24 is disordered; sequence MAHKKGVGSSRNGRDSNPKMRGVK.

Belongs to the bacterial ribosomal protein bL27 family.

This Chloroflexus aggregans (strain MD-66 / DSM 9485) protein is Large ribosomal subunit protein bL27.